The sequence spans 1059 residues: MMTLQMDKTTASSSWERAKSIYDEIAELANKRQKAGNPPDPNLLQLLREKYEAIILESHTFSEQHNIEIPLWQLHYKRIEYFRLHINRVLASSTSTAAQNVKGPSKAEQIAQLKLQFRTFLSEATGFYHDMILKIRSKYGLPLGSFSEDQQSQNLSDKDGKELAEVQKALKSCHRCLIYLGDLARYKGMYAEGDSRSRQYASASSYYLQAASLWPASGNPHHQLAIVASYSRDEFVTTYRYFRSLAVEYPFPTARDNLIVAFDKNRQSYEKLFVPSKDSSKRLTGKGRGKGADISLKDATLVAGPEKDKVTIANEMLKAFSIRFVHLNGILFTRTSLETFFDVLASTSSSLREVISLGSAKELTLGIDTSDSALFIVRVVTMLIFSVHNSKKETEGQSYAEIVQRVEPARNSLTASFELLGLVIEKCVQLGDPSSSYFLPGVLVFVEWLACCPDIALGSDPDDRQTAVRNSFWNQFVVFFNQVLSLGPTFIDDVEDETCFSNMSLYDERETENRLALWEDYELRGFLPLLPAQTILNFSRKHSFGTEGPKEKKARIKRIFAAGKALTSVIKVDQNHVYFDSKKKKFLVGVKPADDFLDSHSSPPKACNALQDNQVMIDHNSPIMQLDQQIYMGEEDDDDEVIVFKPLVTEKRKEASDQIYVPSGGFRKSDQVTTMGDFKALSGSDVAFHENQILQARGNASIQVPASVGANLLGPLQPSTQSQAMHMQQVQTQVQVPASVGANLLGLLLTSTQSQAMHMQQVQTQAVNPQPAQSLAASRLQPIQSQVAQPLPSRVVHFQQTQAQVSHVSPAHSQSTSFGGGSKWSPEEAASLASSLSGFAQLGNGHVMRNEMQGNHGVSYYPAHSLPVHQSYNGNGMGGMPYSQSRTPEAVFPPKIDPVLSSGVVADGLGVQSSLAKKNPISRAFRHLGPPPGFNSVPAKLQKEPAPGSELSGNNHLPVDDYSWLDGYQAQSSRGVGLNSSLNYATSGKPEHLGSTGNGLNGPANFPFPGKQVPTSQVQADFPYFQNPQKDNFVDKNHQSTQLPEQYQGQSTWSSRHFV.

TPR repeat units follow at residues 149–183 (DQQS…LGDL) and 184–217 (ARYK…WPAS). Residues 806 to 817 (SHVSPAHSQSTS) show a composition bias toward polar residues. 4 disordered regions span residues 806-826 (SHVS…KWSP), 927-955 (HLGP…SGNN), 987-1015 (SGKP…QVPT), and 1040-1059 (STQL…RHFV).

Interacts with EXA1. As to expression, expressed in flowers and at lower levels in stems and leaves.

It localises to the cytoplasm. It is found in the P-body. Functionally, plays multiple roles in growth and development. Involved in nonsense-mediated mRNA decay (NMD). May provide a link to the mRNA degradation machinery to initiate NMD and serve as an adapter for UPF proteins function. Required for meiotic progression through anaphase II of pollen mother cells. May counteract cyclin-dependent kinase (CDK) activity at the end of meiosis. May play a role in plant defense through its involvement in NMD. Together with EXA1, helps to restrict cell death induction during pathogen infection in a salicylic acid- (SA) and reactive oxygen species- (ROS) independent manner. The chain is Nonsense-mediated mRNA decay factor SMG7 from Arabidopsis thaliana (Mouse-ear cress).